Here is a 189-residue protein sequence, read N- to C-terminus: Thymidylate kinase (189 aa).

7–14 contacts ATP; sequence GIDTAGKS.

Belongs to the thymidylate kinase family.

The enzyme catalyses dTMP + ATP = dTDP + ADP. Functionally, phosphorylation of dTMP to form dTDP in both de novo and salvage pathways of dTTP synthesis. This chain is Thymidylate kinase, found in Aliarcobacter butzleri (strain RM4018) (Arcobacter butzleri).